A 342-amino-acid polypeptide reads, in one-letter code: Deoxyhypusine synthase regulatory subunit (342 aa).

NAD(+) contacts are provided by residues 72-76, 98-100, E104, D213, 282-283, and 316-317; these read SNLIS, TAG, TG, and DA.

Belongs to the deoxyhypusine synthase family. As to quaternary structure, heterotetramer formed by a homodimer of the non-catalytic regulatory subunit DHSp and a homodimer of the catalytic subunit DHSc where DHSc appears to bind spermidine and DHSp appears to bind NAD(+).

It participates in protein modification; eIF5A hypusination. Required for the activation and stability of deoxyhypusine synthase DHSc. Required for cell growth and survival. The sequence is that of Deoxyhypusine synthase regulatory subunit from Trypanosoma brucei brucei (strain 927/4 GUTat10.1).